Here is a 94-residue protein sequence, read N- to C-terminus: Probable Fe(2+)-trafficking protein (94 aa).

It belongs to the Fe(2+)-trafficking protein family.

Could be a mediator in iron transactions between iron acquisition and iron-requiring processes, such as synthesis and/or repair of Fe-S clusters in biosynthetic enzymes. The chain is Probable Fe(2+)-trafficking protein from Haemophilus ducreyi (strain 35000HP / ATCC 700724).